Here is a 663-residue protein sequence, read N- to C-terminus: Oxytetracycline resistance protein (663 aa).

The 252-residue stretch at 1–252 (MNKLNLGILA…GIRELLPSVH (252 aa)) folds into the tr-type G domain. GTP-binding positions include 10-17 (AHVDAGKT), 74-78 (DTPGH), and 128-131 (NKID).

It belongs to the TRAFAC class translation factor GTPase superfamily. Classic translation factor GTPase family. TetM/TetO subfamily.

Its function is as follows. Abolishes the inhibitory effect of oxytetracycline on protein synthesis by a non-covalent modification of the ribosomes. The chain is Oxytetracycline resistance protein (otrA) from Streptomyces rimosus.